Reading from the N-terminus, the 340-residue chain is Phosphoribosylformylglycinamidine cyclo-ligase (340 aa).

It belongs to the AIR synthase family.

The protein resides in the cytoplasm. The enzyme catalyses 2-formamido-N(1)-(5-O-phospho-beta-D-ribosyl)acetamidine + ATP = 5-amino-1-(5-phospho-beta-D-ribosyl)imidazole + ADP + phosphate + H(+). It participates in purine metabolism; IMP biosynthesis via de novo pathway; 5-amino-1-(5-phospho-D-ribosyl)imidazole from N(2)-formyl-N(1)-(5-phospho-D-ribosyl)glycinamide: step 2/2. The sequence is that of Phosphoribosylformylglycinamidine cyclo-ligase from Streptococcus agalactiae serotype Ia (strain ATCC 27591 / A909 / CDC SS700).